The sequence spans 424 residues: PDZ and LIM domain protein 7 (424 aa).

Positions 1 to 85 (MDSFKVVLEG…RLSLSLSRAQ (85 aa)) constitute a PDZ domain. Ser78 carries the phosphoserine modification. Over residues 81-98 (LSRAQPAQSKPQKVQTPD) the composition is skewed to polar residues. The segment at 81 to 221 (LSRAQPAQSK…HTQPATPTPM (141 aa)) is disordered. Position 96 is a phosphothreonine (Thr96). Over residues 110–123 (SKQRLMEDTEDWRP) the composition is skewed to basic and acidic residues. A compositionally biased stretch (pro residues) spans 174–187 (EPWPGPTTPSPTSR). Over residues 204-221 (KTSTVLTRHTQPATPTPM) the composition is skewed to polar residues. 3 consecutive LIM zinc-binding domains span residues 247-305 (PVCH…VRYA), 306-365 (PSCA…MFGT), and 366-424 (KCRG…FSHV).

Binds via its LIM zinc-binding 3 domain (LIM 3) domain to endocytic codes of INSR, but not with those of IGF1R, LDLR, TFRC, or EGFR. Interacts with various PKC isoforms through the LIM zinc-binding domains. Binds to RET in a phosphorylation-independent manner via its LIM zinc-binding 2 domain (LIM 2). Probably part of a complex with SHC and the RET dimer. Interacts with TPM2, TBX4 and TBX5.

It localises to the cytoplasm. The protein resides in the cytoskeleton. Functionally, may function as a scaffold on which the coordinated assembly of proteins can occur. May play a role as an adapter that, via its PDZ domain, localizes LIM-binding proteins to actin filaments of both skeletal muscle and nonmuscle tissues. Involved in both of the two fundamental mechanisms of bone formation, direct bone formation (e.g. embryonic flat bones mandible and cranium), and endochondral bone formation (e.g. embryonic long bone development). Plays a role during fracture repair. Involved in BMP6 signaling pathway. This chain is PDZ and LIM domain protein 7 (PDLIM7), found in Bos taurus (Bovine).